The chain runs to 426 residues: Glutamyl-tRNA reductase (426 aa).

Substrate is bound by residues 52–55 (TCNR), Ser110, 115–117 (EYE), and Gln121. The active-site Nucleophile is Cys53. Position 190–195 (190–195 (GAGEMG)) interacts with NADP(+).

This sequence belongs to the glutamyl-tRNA reductase family. In terms of assembly, homodimer.

It catalyses the reaction (S)-4-amino-5-oxopentanoate + tRNA(Glu) + NADP(+) = L-glutamyl-tRNA(Glu) + NADPH + H(+). The protein operates within porphyrin-containing compound metabolism; protoporphyrin-IX biosynthesis; 5-aminolevulinate from L-glutamyl-tRNA(Glu): step 1/2. Functionally, catalyzes the NADPH-dependent reduction of glutamyl-tRNA(Glu) to glutamate 1-semialdehyde (GSA). The protein is Glutamyl-tRNA reductase of Saccharolobus islandicus (strain Y.N.15.51 / Yellowstone #2) (Sulfolobus islandicus).